The sequence spans 400 residues: Argininosuccinate synthase (400 aa).

ATP-binding positions include 6–14 (AYSGGLDTS) and Ala-33. Residues Tyr-84 and Ser-89 each contribute to the L-citrulline site. Gly-114 is an ATP binding site. Residues Thr-116, Asn-120, and Asp-121 each coordinate L-aspartate. Residue Asn-120 participates in L-citrulline binding. Arg-124, Ser-173, Ser-182, Glu-258, and Tyr-270 together coordinate L-citrulline.

The protein belongs to the argininosuccinate synthase family. Type 1 subfamily. In terms of assembly, homotetramer.

The protein resides in the cytoplasm. The catalysed reaction is L-citrulline + L-aspartate + ATP = 2-(N(omega)-L-arginino)succinate + AMP + diphosphate + H(+). The protein operates within amino-acid biosynthesis; L-arginine biosynthesis; L-arginine from L-ornithine and carbamoyl phosphate: step 2/3. The sequence is that of Argininosuccinate synthase from Thermus thermophilus (strain ATCC 27634 / DSM 579 / HB8).